The primary structure comprises 345 residues: Anthranilate phosphoribosyltransferase (345 aa).

5-phospho-alpha-D-ribose 1-diphosphate contacts are provided by residues Gly84, 87–88, Thr92, 94–97, 112–120, and Ser124; these read GD, NIST, and KHGNRSVSS. Gly84 is a binding site for anthranilate. Ser96 serves as a coordination point for Mg(2+). Position 115 (Asn115) interacts with anthranilate. Position 170 (Arg170) interacts with anthranilate. 2 residues coordinate Mg(2+): Asp229 and Glu230.

It belongs to the anthranilate phosphoribosyltransferase family. In terms of assembly, homodimer. Requires Mg(2+) as cofactor.

The catalysed reaction is N-(5-phospho-beta-D-ribosyl)anthranilate + diphosphate = 5-phospho-alpha-D-ribose 1-diphosphate + anthranilate. It functions in the pathway amino-acid biosynthesis; L-tryptophan biosynthesis; L-tryptophan from chorismate: step 2/5. Catalyzes the transfer of the phosphoribosyl group of 5-phosphorylribose-1-pyrophosphate (PRPP) to anthranilate to yield N-(5'-phosphoribosyl)-anthranilate (PRA). In Xanthomonas axonopodis pv. citri (strain 306), this protein is Anthranilate phosphoribosyltransferase.